Consider the following 103-residue polypeptide: Large ribosomal subunit protein bL21 (103 aa).

It belongs to the bacterial ribosomal protein bL21 family. Part of the 50S ribosomal subunit. Contacts protein L20.

Functionally, this protein binds to 23S rRNA in the presence of protein L20. The chain is Large ribosomal subunit protein bL21 from Mycolicibacterium paratuberculosis (strain ATCC BAA-968 / K-10) (Mycobacterium paratuberculosis).